The sequence spans 201 residues: UPF0301 protein RHA1_ro03630 (201 aa).

This sequence belongs to the UPF0301 (AlgH) family.

The protein is UPF0301 protein RHA1_ro03630 of Rhodococcus jostii (strain RHA1).